The sequence spans 128 residues: Group 2 truncated hemoglobin GlbO (128 aa).

Positions 23-36 form a cross-link, isodityrosine (Tyr-Tyr); sequence YAQVAEDEVLRRVY. Tyrosine 36 bears the 3',4'-dihydroxyphenylalanine mark. Residue histidine 75 coordinates heme.

Belongs to the truncated hemoglobin family. Group II subfamily. As to quaternary structure, homododecamer. It depends on heme as a cofactor. Post-translationally, contains L-DOPA (3',4'-dihydroxyphenylalanine).

The sequence is that of Group 2 truncated hemoglobin GlbO (glbO) from Mycobacterium bovis (strain ATCC BAA-935 / AF2122/97).